A 333-amino-acid chain; its full sequence is Fructose-1,6-bisphosphatase class 1 (333 aa).

E92, D114, L116, and D117 together coordinate Mg(2+). Substrate-binding positions include 117–120 (DGSS) and N209. E279 is a Mg(2+) binding site.

The protein belongs to the FBPase class 1 family. In terms of assembly, homotetramer. Mg(2+) is required as a cofactor.

It is found in the cytoplasm. It catalyses the reaction beta-D-fructose 1,6-bisphosphate + H2O = beta-D-fructose 6-phosphate + phosphate. It functions in the pathway carbohydrate biosynthesis; gluconeogenesis. This Alkalilimnicola ehrlichii (strain ATCC BAA-1101 / DSM 17681 / MLHE-1) protein is Fructose-1,6-bisphosphatase class 1.